The chain runs to 103 residues: MAAVSLTVSTVKPLGDRIFIKVSESEEKTAGGILLPDSAKEKPQVGEVAQVGPGKLNDDGSRQTPEVSIGDKVLYSKYAGTDIKLGGDEYVLLSEKDILAVVS.

This sequence belongs to the GroES chaperonin family. Heptamer of 7 subunits arranged in a ring. Interacts with the chaperonin GroEL.

It localises to the cytoplasm. In terms of biological role, together with the chaperonin GroEL, plays an essential role in assisting protein folding. The GroEL-GroES system forms a nano-cage that allows encapsulation of the non-native substrate proteins and provides a physical environment optimized to promote and accelerate protein folding. GroES binds to the apical surface of the GroEL ring, thereby capping the opening of the GroEL channel. The polypeptide is Co-chaperonin GroES (Prochlorococcus marinus (strain MIT 9515)).